We begin with the raw amino-acid sequence, 782 residues long: Phosphoribosylformylglycinamidine synthase subunit PurL (782 aa).

Residue H50 is part of the active site. The ATP site is built by Y53 and K92. Mg(2+) is bound at residue E94. Residues 95 to 98 (SHNH) and R117 each bind substrate. Residue H96 is the Proton acceptor of the active site. D118 provides a ligand contact to Mg(2+). A substrate-binding site is contributed by Q241. D269 provides a ligand contact to Mg(2+). Residue 313-315 (ESQ) coordinates substrate. D520 and G557 together coordinate ATP. Residue N558 participates in Mg(2+) binding. S560 provides a ligand contact to substrate.

This sequence belongs to the FGAMS family. Monomer. Part of the FGAM synthase complex composed of 1 PurL, 1 PurQ and 2 PurS subunits.

The protein resides in the cytoplasm. The catalysed reaction is N(2)-formyl-N(1)-(5-phospho-beta-D-ribosyl)glycinamide + L-glutamine + ATP + H2O = 2-formamido-N(1)-(5-O-phospho-beta-D-ribosyl)acetamidine + L-glutamate + ADP + phosphate + H(+). The protein operates within purine metabolism; IMP biosynthesis via de novo pathway; 5-amino-1-(5-phospho-D-ribosyl)imidazole from N(2)-formyl-N(1)-(5-phospho-D-ribosyl)glycinamide: step 1/2. Its function is as follows. Part of the phosphoribosylformylglycinamidine synthase complex involved in the purines biosynthetic pathway. Catalyzes the ATP-dependent conversion of formylglycinamide ribonucleotide (FGAR) and glutamine to yield formylglycinamidine ribonucleotide (FGAM) and glutamate. The FGAM synthase complex is composed of three subunits. PurQ produces an ammonia molecule by converting glutamine to glutamate. PurL transfers the ammonia molecule to FGAR to form FGAM in an ATP-dependent manner. PurS interacts with PurQ and PurL and is thought to assist in the transfer of the ammonia molecule from PurQ to PurL. This is Phosphoribosylformylglycinamidine synthase subunit PurL from Cyanothece sp. (strain PCC 7425 / ATCC 29141).